Reading from the N-terminus, the 257-residue chain is Myosin-8 (257 aa).

Residues 1 to 257 (RAALQAEIEE…REVHTKISAE (257 aa)) adopt a coiled-coil conformation. 3 positions are modified to phosphoserine: S33, S45, and S58.

In terms of assembly, muscle myosin is a hexameric protein that consists of 2 heavy chain subunits (MHC), 2 alkali light chain subunits (MLC) and 2 regulatory light chain subunits (MLC-2).

The protein resides in the cytoplasm. It is found in the myofibril. In terms of biological role, muscle contraction. This is Myosin-8 (Myh8) from Rattus norvegicus (Rat).